The primary structure comprises 875 residues: Ubiquitin-protein ligase E3A (875 aa).

A C4-type; atypical zinc finger spans residues 44 to 83 (CGNEACTNEFCASCPTFLRMDNNAAAIKALELYKINAKLC). Residues 175 to 186 (KEELKSLQAKDE) are compositionally biased toward basic and acidic residues. Residues 175-226 (KEELKSLQAKDEDKDEDEKEKAACSAAAMEEDSEASSSRIGDSSQGDNNLQK) form a disordered region. Positions 213–225 (RIGDSSQGDNNLQ) are enriched in polar residues. A Phosphoserine modification is found at S218. An E6-binding region spans residues 401–418 (IPESSELTLQELLGEERR). The interaction with HCV core protein stretch occupies residues 418-517 (RNKKGPRVDP…TVLYSLVQGQ (100 aa)). Y659 is subject to Phosphotyrosine; by ABL1. One can recognise an HECT domain in the interval 776–875 (YDGGYTRDSV…ITYAKGFGML (100 aa)). Catalysis depends on C843, which acts as the Glycyl thioester intermediate.

In terms of assembly, the active form is probably a homotrimer. Binds UBQLN1 and UBQLN2. Interacts with the 26S proteasome. Interacts with BPY2. Interacts with HIF1AN, MAPK6 and NEURL4; interaction with MAPK6 may be mediated by NEURL4. Interacts with the proteasomal subunit PSMD4. Interacts with ESR1 and WBP2. Interacts with BMAL1. Interacts with ARC. (Microbial infection) Interacts with HCV core protein and targets it to degradation. As to quaternary structure, (Microbial infection) Interacts with the E6 protein of the cancer-associated human papillomavirus types 16 and 18. The E6/E6-AP complex binds to and targets the p53/TP53 tumor-suppressor protein for ubiquitin-mediated proteolysis. Post-translationally, phosphorylation at Tyr-659 by ABL1 impairs E3 ligase activity and protects p53/TP53 from degradation in (HPV)-infected cells.

It localises to the cytoplasm. The protein localises to the nucleus. The catalysed reaction is S-ubiquitinyl-[E2 ubiquitin-conjugating enzyme]-L-cysteine + [acceptor protein]-L-lysine = [E2 ubiquitin-conjugating enzyme]-L-cysteine + N(6)-ubiquitinyl-[acceptor protein]-L-lysine.. The protein operates within protein modification; protein ubiquitination. Its function is as follows. E3 ubiquitin-protein ligase which accepts ubiquitin from an E2 ubiquitin-conjugating enzyme in the form of a thioester and transfers it to its substrates. Several substrates have been identified including the BMAL1, ARC, LAMTOR1, RAD23A and RAD23B, MCM7 (which is involved in DNA replication), annexin A1, the PML tumor suppressor, and the cell cycle regulator CDKN1B. Additionally, may function as a cellular quality control ubiquitin ligase by helping the degradation of the cytoplasmic misfolded proteins. Finally, UBE3A also promotes its own degradation in vivo. Plays an important role in the regulation of the circadian clock: involved in the ubiquitination of the core clock component BMAL1, leading to its proteasomal degradation. Acts as transcriptional coactivator of progesterone receptor PGR upon progesterone hormone activation. Acts as a regulator of synaptic development by mediating ubiquitination and degradation of ARC. Required for synaptic remodeling in neurons by mediating ubiquitination and degradation of LAMTOR1, thereby limiting mTORC1 signaling and activity-dependent synaptic remodeling. Synergizes with WBP2 in enhancing PGR activity. In terms of biological role, (Microbial infection) Catalyzes the high-risk human papilloma virus E6-mediated ubiquitination of p53/TP53, contributing to the neoplastic progression of cells infected by these viruses. This is Ubiquitin-protein ligase E3A from Homo sapiens (Human).